The chain runs to 78 residues: Large ribosomal subunit protein bL28B (78 aa).

The interval 1–29 (MSAHCQVTGRKPGFGNTVSHSHRRSRRRW) is disordered. Positions 20-29 (HSHRRSRRRW) are enriched in basic residues.

Belongs to the bacterial ribosomal protein bL28 family.

The sequence is that of Large ribosomal subunit protein bL28B (rpmB2) from Mycobacterium bovis (strain ATCC BAA-935 / AF2122/97).